The sequence spans 225 residues: Phosphoenolpyruvate guanylyltransferase (225 aa).

Phosphoenolpyruvate is bound by residues threonine 150, glycine 166, and serine 169. The tract at residues 167–186 (PESARGHANSGARPLNGQWP) is disordered.

This sequence belongs to the CofC family.

It catalyses the reaction phosphoenolpyruvate + GTP + H(+) = enolpyruvoyl-2-diphospho-5'-guanosine + diphosphate. Its pathway is cofactor biosynthesis; coenzyme F420 biosynthesis. Guanylyltransferase that catalyzes the activation of phosphoenolpyruvate (PEP) as enolpyruvoyl-2-diphospho-5'-guanosine, via the condensation of PEP with GTP. It is involved in the biosynthesis of coenzyme F420, a hydride carrier cofactor. The protein is Phosphoenolpyruvate guanylyltransferase of Rhodococcus erythropolis (strain PR4 / NBRC 100887).